Reading from the N-terminus, the 504-residue chain is Cytochrome P450 3A1 (504 aa).

Cysteine 443 provides a ligand contact to heme.

Belongs to the cytochrome P450 family. Requires heme as cofactor.

Its subcellular location is the endoplasmic reticulum membrane. The protein resides in the microsome membrane. It carries out the reaction an organic molecule + reduced [NADPH--hemoprotein reductase] + O2 = an alcohol + oxidized [NADPH--hemoprotein reductase] + H2O + H(+). Functionally, cytochromes P450 are a group of heme-thiolate monooxygenases. In liver microsomes, this enzyme is involved in an NADPH-dependent electron transport pathway. It oxidizes a variety of structurally unrelated compounds, including steroids, fatty acids, and xenobiotics. This chain is Cytochrome P450 3A1 (Cyp3a1), found in Rattus norvegicus (Rat).